Here is a 777-residue protein sequence, read N- to C-terminus: Biotin sulfoxide reductase (777 aa).

Residue Ser-148 participates in Mo-bis(molybdopterin guanine dinucleotide) binding.

Belongs to the prokaryotic molybdopterin-containing oxidoreductase family. The cofactor is Mo-bis(molybdopterin guanine dinucleotide).

The catalysed reaction is [thioredoxin]-disulfide + L-methionine + H2O = L-methionine (S)-S-oxide + [thioredoxin]-dithiol. In terms of biological role, this enzyme may serve as a scavenger, allowing the cell to utilize biotin sulfoxide as a biotin source. It reduces a spontaneous oxidation product of biotin, D-biotin D-sulfoxide (BSO or BDS), back to biotin. Also exhibits methionine-(S)-sulfoxide (Met-S-SO) reductase activity, acting specifically on the (S) enantiomer in the free, but not the protein-bound form. It thus plays a role in assimilation of oxidized methionines. The sequence is that of Biotin sulfoxide reductase (bisC) from Escherichia coli (strain K12).